Here is a 155-residue protein sequence, read N- to C-terminus: Small ribosomal subunit protein uS7 (155 aa).

It belongs to the universal ribosomal protein uS7 family. Part of the 30S ribosomal subunit. Contacts proteins S9 and S11.

In terms of biological role, one of the primary rRNA binding proteins, it binds directly to 16S rRNA where it nucleates assembly of the head domain of the 30S subunit. Is located at the subunit interface close to the decoding center, probably blocks exit of the E-site tRNA. In Mycoplasma capricolum subsp. capricolum (strain California kid / ATCC 27343 / NCTC 10154), this protein is Small ribosomal subunit protein uS7.